An 89-amino-acid polypeptide reads, in one-letter code: MALTKERKNEIIEAYATKQGDTGSPEVQVAVLTEQITTLNDHLRTHKKDHHSRRGLLKMVGRRRNLLTYLRNKDVSRYRSLIERLGLRR.

It belongs to the universal ribosomal protein uS15 family. Part of the 30S ribosomal subunit. Forms a bridge to the 50S subunit in the 70S ribosome, contacting the 23S rRNA.

Its function is as follows. One of the primary rRNA binding proteins, it binds directly to 16S rRNA where it helps nucleate assembly of the platform of the 30S subunit by binding and bridging several RNA helices of the 16S rRNA. In terms of biological role, forms an intersubunit bridge (bridge B4) with the 23S rRNA of the 50S subunit in the ribosome. This is Small ribosomal subunit protein uS15 from Exiguobacterium sibiricum (strain DSM 17290 / CCUG 55495 / CIP 109462 / JCM 13490 / 255-15).